Reading from the N-terminus, the 2193-residue chain is Genome polyprotein (2193 aa).

Gly-2 carries the N-myristoyl glycine; by host lipid modification. Over Gly-2 to Gln-1503 the chain is Cytoplasmic. The amphipathic alpha-helix stretch occupies residues Gln-565–Val-582. Active-site for protease 2A activity residues include His-880 and Asp-898. Zn(2+) is bound by residues Cys-915 and Cys-917. Catalysis depends on Cys-969, which acts as the For protease 2A activity. Zn(2+) is bound by residues Cys-975 and His-977. The interval Ser-1109 to Gln-1181 is membrane-binding. The oligomerization stretch occupies residues Ser-1109 to Thr-1247. Residues Ala-1130 to Gln-1134 are RNA-binding. Residues Glu-1213–Asn-1369 enclose the SF3 helicase domain. Zn(2+) is bound by residues Cys-1377, Cys-1389, and Cys-1394. The segment at Cys-1377–Cys-1394 adopts a C4-type; degenerate zinc-finger fold. The interval Glu-1421 to Val-1428 is RNA-binding. Residues Leu-1432–Gln-1437 are oligomerization. The stretch at Ala-1504 to Tyr-1519 is an intramembrane region. At Lys-1520–Phe-2193 the chain is on the cytoplasmic side. The residue at position 1529 (Tyr-1529) is an O-(5'-phospho-RNA)-tyrosine. A Peptidase C3 domain is found at Gly-1549–Phe-1727. Residues His-1588, Glu-1619, and Cys-1695 each act as for protease 3C activity in the active site. The RdRp catalytic domain maps to Gly-1958–Leu-2074. Positions 1964 and 2060 each coordinate Mg(2+).

It belongs to the picornaviruses polyprotein family. In terms of assembly, interacts with capsid protein VP1 and capsid protein VP3 to form heterotrimeric protomers. Interacts with capsid protein VP0, and capsid protein VP3 to form heterotrimeric protomers. Five protomers subsequently associate to form pentamers which serve as building blocks for the capsid. Interacts with capsid protein VP2, capsid protein VP3 and capsid protein VP4 following cleavage of capsid protein VP0. As to quaternary structure, interacts with capsid protein VP1 and capsid protein VP3 in the mature capsid. Interacts with host CD55; this interaction promotes virus attachment to the host cell and subsequent internalization. In terms of assembly, interacts with capsid protein VP0 and capsid protein VP1 to form heterotrimeric protomers. Five protomers subsequently associate to form pentamers which serve as building blocks for the capsid. Interacts with capsid protein VP4 in the mature capsid. Interacts with protein 2C; this interaction may be important for virion morphogenesis. Interacts with host CD55; this interaction promotes virus attachment to the host cell and subsequent internalization. Interacts with capsid protein VP1 and capsid protein VP3. As to quaternary structure, homodimer. In terms of assembly, homohexamer; forms a hexameric ring structure with 6-fold symmetry characteristic of AAA+ ATPases. Interacts (via N-terminus) with host RTN3 (via reticulon domain); this interaction is important for viral replication. Interacts with capsid protein VP3; this interaction may be important for virion morphogenesis. Interacts with protein 3CD. As to quaternary structure, homodimer. Interacts with host GBF1. Interacts (via GOLD domain) with host ACBD3 (via GOLD domain); this interaction allows the formation of a viral protein 3A/ACBD3 heterotetramer with a 2:2 stoichiometry, which will stimulate the recruitment of host PI4KB in order to synthesize PI4P at the viral RNA replication sites. In terms of assembly, interacts with RNA-directed RNA polymerase. Interacts with protein 3AB and with RNA-directed RNA polymerase. As to quaternary structure, interacts with Viral protein genome-linked and with protein 3CD. Requires Mg(2+) as cofactor. Specific enzymatic cleavages in vivo by the viral proteases yield processing intermediates and the mature proteins. In terms of processing, myristoylation is required for the formation of pentamers during virus assembly. Further assembly of 12 pentamers and a molecule of genomic RNA generates the provirion. Post-translationally, during virion maturation, immature virions are rendered infectious following cleavage of VP0 into VP4 and VP2. This maturation seems to be an autocatalytic event triggered by the presence of RNA in the capsid and it is followed by a conformational change infectious virion. Myristoylation is required during RNA encapsidation and formation of the mature virus particle. In terms of processing, VPg is uridylylated by the polymerase into VPg-pUpU. This acts as a nucleotide-peptide primer for the genomic RNA replication.

Its subcellular location is the virion. It localises to the host cytoplasm. The protein localises to the host cytoplasmic vesicle membrane. It is found in the host nucleus. It carries out the reaction a ribonucleoside 5'-triphosphate + H2O = a ribonucleoside 5'-diphosphate + phosphate + H(+). It catalyses the reaction Selective cleavage of Tyr-|-Gly bond in the picornavirus polyprotein.. The catalysed reaction is RNA(n) + a ribonucleoside 5'-triphosphate = RNA(n+1) + diphosphate. The enzyme catalyses Selective cleavage of Gln-|-Gly bond in the poliovirus polyprotein. In other picornavirus reactions Glu may be substituted for Gln, and Ser or Thr for Gly.. Replication or transcription is subject to high level of random mutations by the nucleotide analog ribavirin. Forms an icosahedral capsid of pseudo T=3 symmetry with capsid proteins VP2 and VP3. The capsid is 300 Angstroms in diameter, composed of 60 copies of each capsid protein and enclosing the viral positive strand RNA genome. Capsid protein VP1 mainly forms the vertices of the capsid. Capsid protein VP1 interacts with host cell receptor to provide virion attachment to target host cells. This attachment induces virion internalization. Tyrosine kinases are probably involved in the entry process. After binding to its receptor, the capsid undergoes conformational changes. Capsid protein VP1 N-terminus (that contains an amphipathic alpha-helix) and capsid protein VP4 are externalized. Together, they shape a pore in the host membrane through which viral genome is translocated to host cell cytoplasm. Its function is as follows. Forms an icosahedral capsid of pseudo T=3 symmetry with capsid proteins VP2 and VP3. The capsid is 300 Angstroms in diameter, composed of 60 copies of each capsid protein and enclosing the viral positive strand RNA genome. Functionally, lies on the inner surface of the capsid shell. After binding to the host receptor, the capsid undergoes conformational changes. Capsid protein VP4 is released, Capsid protein VP1 N-terminus is externalized, and together, they shape a pore in the host membrane through which the viral genome is translocated into the host cell cytoplasm. In terms of biological role, component of immature procapsids, which is cleaved into capsid proteins VP4 and VP2 after maturation. Allows the capsid to remain inactive before the maturation step. Cysteine protease that cleaves viral polyprotein and specific host proteins. It is responsible for the autocatalytic cleavage between the P1 and P2 regions, which is the first cleavage occurring in the polyprotein. Also cleaves the host translation initiation factor EIF4G1, in order to shut down the capped cellular mRNA translation. Inhibits the host nucleus-cytoplasm protein and RNA trafficking by cleaving host members of the nuclear pores. Counteracts stress granule formation probably by antagonizing its assembly or promoting its dissassembly. Its function is as follows. Plays an essential role in the virus replication cycle by acting as a viroporin. Creates a pore in the host endoplasmic reticulum and as a consequence releases Ca2+ in the cytoplasm of infected cell. In turn, high levels of cytoplasmic calcium may trigger membrane trafficking and transport of viral ER-associated proteins to viroplasms, sites of viral genome replication. Functionally, induces and associates with structural rearrangements of intracellular membranes. Displays RNA-binding, nucleotide binding and NTPase activities. May play a role in virion morphogenesis and viral RNA encapsidation by interacting with the capsid protein VP3. In terms of biological role, localizes the viral replication complex to the surface of membranous vesicles. Together with protein 3CD binds the Cis-Active RNA Element (CRE) which is involved in RNA synthesis initiation. Acts as a cofactor to stimulate the activity of 3D polymerase, maybe through a nucleid acid chaperone activity. Localizes the viral replication complex to the surface of membranous vesicles. It inhibits host cell endoplasmic reticulum-to-Golgi apparatus transport and causes the disassembly of the Golgi complex, possibly through GBF1 interaction. This would result in depletion of MHC, trail receptors and IFN receptors at the host cell surface. Plays an essential role in viral RNA replication by recruiting ACBD3 and PI4KB at the viral replication sites, thereby allowing the formation of the rearranged membranous structures where viral replication takes place. Its function is as follows. Acts as a primer for viral RNA replication and remains covalently bound to viral genomic RNA. VPg is uridylylated prior to priming replication into VPg-pUpU. The oriI viral genomic sequence may act as a template for this. The VPg-pUpU is then used as primer on the genomic RNA poly(A) by the RNA-dependent RNA polymerase to replicate the viral genome. During genome replication, the VPg-RNA linkage is removed by the host TDP2, thereby accelerating replication. During the late stage of the replication cycle, host TDP2 is excluded from sites of viral RNA synthesis and encapsidation, allowing for the generation of progeny virions. Functionally, involved in the viral replication complex and viral polypeptide maturation. It exhibits protease activity with a specificity and catalytic efficiency that is different from protease 3C. Protein 3CD lacks polymerase activity. Protein 3CD binds to the 5'UTR of the viral genome. In terms of biological role, replicates the viral genomic RNA on the surface of intracellular membranes. May form linear arrays of subunits that propagate along a strong head-to-tail interaction called interface-I. Covalently attaches UMP to a tyrosine of VPg, which is used to prime RNA synthesis. The positive stranded RNA genome is first replicated at virus induced membranous vesicles, creating a dsRNA genomic replication form. This dsRNA is then used as template to synthesize positive stranded RNA genomes. ss(+)RNA genomes are either translated, replicated or encapsidated. Major viral protease that mediates proteolytic processing of the polyprotein. Cleaves host EIF5B, contributing to host translation shutoff. Also cleaves host PABPC1, contributing to host translation shutoff. Cleaves host NLRP1, triggers host N-glycine-mediated degradation of the autoinhibitory NLRP1 N-terminal fragment. The chain is Genome polyprotein from Echovirus 12 (strain Travis).